A 191-amino-acid chain; its full sequence is Protein Ves (191 aa).

It belongs to the Ves family.

The polypeptide is Protein Ves (Escherichia coli (strain ATCC 8739 / DSM 1576 / NBRC 3972 / NCIMB 8545 / WDCM 00012 / Crooks)).